The primary structure comprises 102 residues: Small ribosomal subunit protein uS10 (102 aa).

The protein belongs to the universal ribosomal protein uS10 family. In terms of assembly, part of the 30S ribosomal subunit.

In terms of biological role, involved in the binding of tRNA to the ribosomes. The sequence is that of Small ribosomal subunit protein uS10 from Staphylococcus haemolyticus (strain JCSC1435).